Here is a 365-residue protein sequence, read N- to C-terminus: Probable dual-specificity RNA methyltransferase RlmN (365 aa).

Residue Glu108 is the Proton acceptor of the active site. One can recognise a Radical SAM core domain in the interval 114 to 347 (HNYGNSVCVT…VTIRREHGHD (234 aa)). Cys121 and Cys352 are oxidised to a cystine. Positions 128, 132, and 135 each coordinate [4Fe-4S] cluster. S-adenosyl-L-methionine-binding positions include 178 to 179 (GE), Ser210, 233 to 235 (SLH), and Asn309. The active-site S-methylcysteine intermediate is the Cys352.

It belongs to the radical SAM superfamily. RlmN family. [4Fe-4S] cluster is required as a cofactor.

The protein localises to the cytoplasm. It catalyses the reaction adenosine(2503) in 23S rRNA + 2 reduced [2Fe-2S]-[ferredoxin] + 2 S-adenosyl-L-methionine = 2-methyladenosine(2503) in 23S rRNA + 5'-deoxyadenosine + L-methionine + 2 oxidized [2Fe-2S]-[ferredoxin] + S-adenosyl-L-homocysteine. It carries out the reaction adenosine(37) in tRNA + 2 reduced [2Fe-2S]-[ferredoxin] + 2 S-adenosyl-L-methionine = 2-methyladenosine(37) in tRNA + 5'-deoxyadenosine + L-methionine + 2 oxidized [2Fe-2S]-[ferredoxin] + S-adenosyl-L-homocysteine. Its function is as follows. Specifically methylates position 2 of adenine 2503 in 23S rRNA and position 2 of adenine 37 in tRNAs. The chain is Probable dual-specificity RNA methyltransferase RlmN from Geobacillus kaustophilus (strain HTA426).